Reading from the N-terminus, the 90-residue chain is DNA-binding protein HRm (90 aa).

This sequence belongs to the bacterial histone-like protein family.

Functionally, histone-like DNA-binding protein which is capable of wrapping DNA to stabilize it, and thus to prevent its denaturation under extreme environmental conditions. The polypeptide is DNA-binding protein HRm (hupB) (Rhizobium meliloti (strain 1021) (Ensifer meliloti)).